Reading from the N-terminus, the 850-residue chain is MRGLPNFYHSYTFFFFFLLILFPAYSISANTLSASESLTISSNNTIVSPGNVFELGFFKPGLDSRWYLGIWYKAISKRTYVWVANRDTPLSSSIGTLKISDSNLVVLDQSDTPVWSTNLTGGDVRSPLVAELLDNGNFVLRDSKNSAPDGVLWQSFDFPTDTLLPEMKLGWDAKTGFNRFIRSWKSPDDPSSGDFSFKLETEGFPEIFLWNRESRMYRSGPWNGIRFSGVPEMQPFEYMVFNFTTSKEEVTYSFRITKSDVYSRLSISSSGLLQRFTWIETAQNWNQFWYAPKDQCDEYKECGVYGYCDSNTSPVCNCIKGFKPRNPQVWGLRDGSDGCVRKTLLSCGGGDGFVRLKKMKLPDTTTASVDRGIGVKECEQKCLRDCNCTAFANTDIRGSGSGCVTWTGELFDIRNYAKGGQDLYVRLAATDLEDKRNRSAKIIGSSIGVSVLLLLSFIIFFLWKRKQKRSILIETPIVDHQLRSRDLLMNEVVISSRRHISRENNTDDLELPLMEFEEVAMATNNFSNANKLGQGGFGIVYKGKLLDGQEMAVKRLSKTSVQGTDEFKNEVKLIARLQHINLVRLLACCVDAGEKMLIYEYLENLSLDSHLFDKSRNSKLNWQMRFDIINGIARGLLYLHQDSRFRIIHRDLKASNILLDKYMTPKISDFGMARIFGRDETEANTRKVVGTYGYMSPEYAMDGIFSMKSDVFSFGVLLLEIISSKRNKGFYNSDRDLNLLGCVWRNWKEGKGLEIIDPIITDSSSTFRQHEILRCIQIGLLCVQERAEDRPTMSLVILMLGSESTTIPQPKAPGYCLERSLLDTDSSSSKQRDDESWTVNQITVSVLDAR.

The signal sequence occupies residues 1–26; the sequence is MRGLPNFYHSYTFFFFFLLILFPAYS. The Extracellular segment spans residues 27-441; it reads ISANTLSASE…LEDKRNRSAK (415 aa). In terms of domain architecture, Bulb-type lectin spans 31–153; the sequence is TLSASESLTI…KNSAPDGVLW (123 aa). 3 N-linked (GlcNAc...) asparagine glycosylation sites follow: asparagine 43, asparagine 118, and asparagine 242. The 37-residue stretch at 292–328 folds into the EGF-like domain; the sequence is PKDQCDEYKECGVYGYCDSNTSPVCNCIKGFKPRNPQ. Cystine bridges form between cysteine 296/cysteine 308, cysteine 302/cysteine 316, cysteine 378/cysteine 403, and cysteine 382/cysteine 388. The region spanning 347–428 is the PAN domain; that stretch reads CGGGDGFVRL…GGQDLYVRLA (82 aa). N-linked (GlcNAc...) asparagine glycans are attached at residues asparagine 387 and asparagine 437. The chain crosses the membrane as a helical span at residues 442–462; that stretch reads IIGSSIGVSVLLLLSFIIFFL. The Cytoplasmic segment spans residues 463 to 850; sequence WKRKQKRSIL…QITVSVLDAR (388 aa). The Protein kinase domain occupies 526 to 807; the sequence is FSNANKLGQG…LMLGSESTTI (282 aa). ATP-binding positions include 532–540 and lysine 554; that span reads LGQGGFGIV. The segment at 615–632 is caM-binding; the sequence is SRNSKLNWQMRFDIINGI. The Proton acceptor role is filled by aspartate 651.

Belongs to the protein kinase superfamily. Ser/Thr protein kinase family. As to quaternary structure, interacts with PUB9, PUB13, PUB14 and PUB38. As to expression, expressed in the root-hypocotyl transition zone, at the base of lateral roots, axillary buds and pedicels.

It localises to the cell membrane. It carries out the reaction L-seryl-[protein] + ATP = O-phospho-L-seryl-[protein] + ADP + H(+). It catalyses the reaction L-threonyl-[protein] + ATP = O-phospho-L-threonyl-[protein] + ADP + H(+). Involved in the regulation of cellular expansion and differentiation. This chain is Receptor-like serine/threonine-protein kinase SD1-8 (SD18), found in Arabidopsis thaliana (Mouse-ear cress).